The sequence spans 208 residues: Peptide deformylase 3 (208 aa).

Cysteine 120 and histidine 162 together coordinate Fe cation. Glutamate 163 is an active-site residue. A Fe cation-binding site is contributed by histidine 166.

It belongs to the polypeptide deformylase family. Requires Fe(2+) as cofactor.

The catalysed reaction is N-terminal N-formyl-L-methionyl-[peptide] + H2O = N-terminal L-methionyl-[peptide] + formate. Functionally, removes the formyl group from the N-terminal Met of newly synthesized proteins. Requires at least a dipeptide for an efficient rate of reaction. N-terminal L-methionine is a prerequisite for activity but the enzyme has broad specificity at other positions. The polypeptide is Peptide deformylase 3 (Streptomyces coelicolor (strain ATCC BAA-471 / A3(2) / M145)).